The primary structure comprises 359 residues: GATA-binding factor 1-A (359 aa).

The interval 1–21 (MDYTTLTTQDPDPNYTESGLA) is disordered. GATA-type zinc fingers lie at residues 178–202 (CVNC…CNAC) and 232–256 (CSNC…CNAC). 2 disordered regions span residues 271–311 (MKKE…SPYP) and 323–359 (PMGH…VTPP). The segment covering 279–291 (RNRKVSSRSKKKK) has biased composition (basic residues).

As to expression, expressed in the developing ventral blood island, and in both tadpole and adult erythrocytes.

Its subcellular location is the nucleus. In terms of biological role, transcription factor that acts synergistically with tal1/scl and lmo2 to specify embryonic dorsal mesoderm to a hematopoietic fate. The polypeptide is GATA-binding factor 1-A (gata1-a) (Xenopus laevis (African clawed frog)).